We begin with the raw amino-acid sequence, 445 residues long: Tryptamine benzoyltransferase 1 (445 aa).

Active-site proton acceptor residues include histidine 150 and aspartate 382.

It belongs to the plant acyltransferase family.

Hydroxycinnamoyl transferase that catalyzes the transfer of an acyl from benzoyl-CoA to tryptamine, to produce benzoyl tryptamine. Serotonin and tyramine serve as acyl acceptors in vitro. Can use p-coumaroyl-CoA, and to a lesser extent caffeoyl-CoA, as acyl donors. The polypeptide is Tryptamine benzoyltransferase 1 (Oryza sativa subsp. japonica (Rice)).